We begin with the raw amino-acid sequence, 301 residues long: Chitin deacetylase 1 (301 aa).

Residues 1 to 24 form the signal peptide; that stretch reads MKIFNTIQSVLFAAFFLKQGNCLA. N-linked (GlcNAc...) asparagine glycans are attached at residues N26, N50, and N68. C107 and C290 are oxidised to a cystine. The region spanning 108–288 is the NodB homology domain; it reads FKLSQTFDDG…LIGSDQLTIA (181 aa). D115 serves as the catalytic Proton acceptor. D115 provides a ligand contact to acetate. Co(2+) contacts are provided by D116, H162, and H166. An N-linked (GlcNAc...) asparagine glycan is attached at N189. Residue Y203 coordinates acetate. H263 acts as the Proton donor in catalysis.

This sequence belongs to the polysaccharide deacetylase family. Co(2+) is required as a cofactor.

The protein localises to the prospore. The catalysed reaction is [(1-&gt;4)-N-acetyl-beta-D-glucosaminyl](n) + n H2O = chitosan + n acetate. Hydrolyzes the N-acetamido groups of N-acetyl-D-glucosamine residues in chitin to form chitosan and acetate. Chitosan is a component of the spore wall. This is Chitin deacetylase 1 from Saccharomyces cerevisiae (strain ATCC 204508 / S288c) (Baker's yeast).